A 442-amino-acid chain; its full sequence is D-serine dehydratase (442 aa).

The residue at position 118 (Lys118) is an N6-(pyridoxal phosphate)lysine.

It belongs to the serine/threonine dehydratase family. DsdA subfamily. As to quaternary structure, monomer. The cofactor is pyridoxal 5'-phosphate.

The catalysed reaction is D-serine = pyruvate + NH4(+). This Escherichia coli O81 (strain ED1a) protein is D-serine dehydratase.